The primary structure comprises 169 residues: Peptide methionine sulfoxide reductase MsrA (169 aa).

The active site involves C10.

The protein belongs to the MsrA Met sulfoxide reductase family.

The catalysed reaction is L-methionyl-[protein] + [thioredoxin]-disulfide + H2O = L-methionyl-(S)-S-oxide-[protein] + [thioredoxin]-dithiol. The enzyme catalyses [thioredoxin]-disulfide + L-methionine + H2O = L-methionine (S)-S-oxide + [thioredoxin]-dithiol. In terms of biological role, has an important function as a repair enzyme for proteins that have been inactivated by oxidation. Catalyzes the reversible oxidation-reduction of methionine sulfoxide in proteins to methionine. The polypeptide is Peptide methionine sulfoxide reductase MsrA (Streptococcus mutans serotype c (strain ATCC 700610 / UA159)).